The primary structure comprises 280 residues: 4-diphosphocytidyl-2-C-methyl-D-erythritol kinase (280 aa).

Residue lysine 8 is part of the active site. Proline 91–serine 101 is a binding site for ATP. Aspartate 133 is an active-site residue.

The protein belongs to the GHMP kinase family. IspE subfamily.

The enzyme catalyses 4-CDP-2-C-methyl-D-erythritol + ATP = 4-CDP-2-C-methyl-D-erythritol 2-phosphate + ADP + H(+). The protein operates within isoprenoid biosynthesis; isopentenyl diphosphate biosynthesis via DXP pathway; isopentenyl diphosphate from 1-deoxy-D-xylulose 5-phosphate: step 3/6. Functionally, catalyzes the phosphorylation of the position 2 hydroxy group of 4-diphosphocytidyl-2C-methyl-D-erythritol. In Clostridium novyi (strain NT), this protein is 4-diphosphocytidyl-2-C-methyl-D-erythritol kinase.